We begin with the raw amino-acid sequence, 219 residues long: uncharacterized protein (219 aa).

At S23 the chain carries Phosphoserine. K137 is covalently cross-linked (Glycyl lysine isopeptide (Lys-Gly) (interchain with G-Cter in SUMO)).

The protein localises to the cytoplasm. This is an uncharacterized protein from Saccharomyces cerevisiae (strain ATCC 204508 / S288c) (Baker's yeast).